The primary structure comprises 299 residues: KATNB1-like protein 1 (299 aa).

The short motif at 8 to 15 (VKKRNFSN) is the Nuclear localization signal element. Position 56 is a phosphoserine (S56).

As to quaternary structure, interacts with KATNA1 and KATNAL1; these interactions are competed by KATNB1 which has a higher affinity for them.

Its subcellular location is the nucleus. It localises to the cytoplasm. It is found in the cytoskeleton. The protein resides in the spindle pole. In terms of biological role, regulates microtubule-severing activity of KATNAL1 in a concentration-dependent manner in vitro. The protein is KATNB1-like protein 1 (Katnbl1) of Mus musculus (Mouse).